Reading from the N-terminus, the 493-residue chain is Aminotransferase swnA (493 aa).

This sequence belongs to the class-I pyridoxal-phosphate-dependent aminotransferase family. Requires pyridoxal 5'-phosphate as cofactor.

It functions in the pathway mycotoxin biosynthesis. Its function is as follows. Aminotransferase; part of the gene cluster that mediates the biosynthesis of swainsonine (SW), a cytotoxic fungal alkaloid and a potential cancer therapy drug. Swainsonine production occurs via a multibranched pathway and is dispensable for fungal colonization of plants and infection of insect hosts. The first step of swainsonine biosynthesis is the production of the precursor pipecolic acid (PA) via conversion of L-lysine (Lys) to 1-piperideine-6-carboxylate (P6C) by the aminotransferase swnA, the latter being further reduced to PA by the reductase swnR. The PKS-NRPS hybrid synthetase swnK uptakes and condensates PA and malonyl-CoA with and without skipping of the ketoreductase (KR) domain in order to produce 3 intermediates, 1-oxoindolizidine, (1S)-1-hydroxyindolizin, and (1R)-1-hydroxyindolizine; with the transisomer (1S)-1-hydroxyindolizin being predominant. The terminal thioester reductase (TE) domain of swnK is involved in reduction of the thioester bond to release the intermediate aldehydes. The oxidoreductase swnN could contribute to the reduction of 1-oxoindolizidine to (1S)-1-hydroxyindolizin and (1R)-1-hydroxyindolizine, contributing to the major route of SW production. The dioxygenase swnH2 would be responsible for the oxidization of (1R)-1-hydroxyindolizine into (1R,2S)-1,2-dihydroxyindolizine and of (1S)-1-hydroxyindolizin to yield both (1R,2S)-1,2-dihydroxyindolizine and (1S,2S)-1,2-dihydroxyindolizine. The dioxygenase swnH1 then performs the conversion of the 1,2-dihydroxyindolizine epimers to SW. The polypeptide is Aminotransferase swnA (Arthroderma benhamiae (strain ATCC MYA-4681 / CBS 112371) (Trichophyton mentagrophytes)).